A 953-amino-acid polypeptide reads, in one-letter code: Coiled-coil domain-containing protein 14 (953 aa).

A compositionally biased stretch (basic residues) spans Met-1–Lys-21. 2 disordered regions span residues Met-1–Val-22 and Ser-52–Thr-72. Position 124 is a phosphoserine (Ser-124). 2 disordered regions span residues Ser-126 to Leu-189 and Pro-268 to Ala-287. The span at Tyr-145–Lys-154 shows a compositional bias: basic residues. Residues Asp-169–Ser-187 show a composition bias toward basic and acidic residues. Positions Glu-277 to Ala-287 are enriched in polar residues. Coiled coils occupy residues Leu-383–Lys-413 and Ala-483–Glu-618. A phosphoserine mark is found at Ser-670, Ser-754, and Ser-798.

Interacts with CEP63.

Its subcellular location is the cytoplasm. It is found in the cytoskeleton. The protein resides in the microtubule organizing center. It localises to the centrosome. The protein localises to the centriolar satellite. Functionally, negatively regulates centriole duplication. Negatively regulates CEP63 and CDK2 centrosomal localization. The polypeptide is Coiled-coil domain-containing protein 14 (CCDC14) (Homo sapiens (Human)).